The chain runs to 240 residues: Nudix hydrolase 3 (240 aa).

A Nudix hydrolase domain is found at 50-190; the sequence is NSAMSVLIPL…RMKYTLPSFD (141 aa). The short motif at 89 to 110 is the Nudix box element; the sequence is GRMDPGETTTETALRETFEEIG. Glu-104 and Glu-108 together coordinate Mg(2+).

The protein belongs to the Nudix hydrolase family. PCD1 subfamily. Mn(2+) serves as cofactor. Requires Mg(2+) as cofactor.

In terms of biological role, probably mediates the hydrolysis of some nucleoside diphosphate derivatives. The protein is Nudix hydrolase 3 (ndx-3) of Caenorhabditis elegans.